Consider the following 503-residue polypeptide: Beta-amylase Tri a 17 (503 aa).

Residues Asp-51, His-91, and Asp-99 each coordinate substrate. Residue Glu-184 is the Proton donor of the active site. Substrate contacts are provided by Lys-293, His-298, and Thr-340. Catalysis depends on Glu-378, which acts as the Proton acceptor. Residues 379–380 (NA) and Arg-418 each bind substrate.

It belongs to the glycosyl hydrolase 14 family.

It carries out the reaction Hydrolysis of (1-&gt;4)-alpha-D-glucosidic linkages in polysaccharides so as to remove successive maltose units from the non-reducing ends of the chains.. This is Beta-amylase Tri a 17 (BMY1) from Triticum aestivum (Wheat).